Here is a 153-residue protein sequence, read N- to C-terminus: Ribosome maturation factor RimP (153 aa).

The protein belongs to the RimP family.

Its subcellular location is the cytoplasm. Its function is as follows. Required for maturation of 30S ribosomal subunits. In Pelotomaculum thermopropionicum (strain DSM 13744 / JCM 10971 / SI), this protein is Ribosome maturation factor RimP.